Consider the following 348-residue polypeptide: MSSPKPSLSYRDAGVDIDAGDALVDRIKPLAKRTMRPEVLGGIGGFGALFELSKKYREPVLVSGTDGVGTKLKLAFQLNRHDTVGQDLVAMSVNDILVQGAEPLFFLDYFACGKLDVDTAAAVVSGIARGCELSGCALIGGETAEMHGMYPDGEYDLAGFAVGAVEKSEIIDGSRIVPGDVVLGLASSGAHSNGYSLIRKIIDLAKPDLDADFHGRPLRDVILEPTRLYVKPMLGLMQAIPGVVKGMAHITGGGLLENVPRILADGLAARLDVSSWTLPPLFQWLRDAGNVDAQEMYRVFNCGVGMVVIVSAAQAGAAVQNLEAAGEIVYRLGRIESRAEGAAQTTVG.

This sequence belongs to the AIR synthase family.

The protein resides in the cytoplasm. The catalysed reaction is 2-formamido-N(1)-(5-O-phospho-beta-D-ribosyl)acetamidine + ATP = 5-amino-1-(5-phospho-beta-D-ribosyl)imidazole + ADP + phosphate + H(+). It participates in purine metabolism; IMP biosynthesis via de novo pathway; 5-amino-1-(5-phospho-D-ribosyl)imidazole from N(2)-formyl-N(1)-(5-phospho-D-ribosyl)glycinamide: step 2/2. This chain is Phosphoribosylformylglycinamidine cyclo-ligase, found in Aromatoleum aromaticum (strain DSM 19018 / LMG 30748 / EbN1) (Azoarcus sp. (strain EbN1)).